The chain runs to 672 residues: MMDAESARKNIEDLKARIEYHNRRYYQLDDPEISDAEYDSLLQELIALEKQFPQWLTEDSPSRRIGAAPLSKFAPAVHLSPMLSLANAFSEEEILEFDRRLKRFLDSSERLSFVVEPKIDGVAVNLIYSSGVLTTGATRGDGAKGEDVTQNIRTLHTIPLKIQNGSDERLPEQIEIRGEIYMETAAFRKLNERRLAAGEPPFANPRNAAAGSLRQLDASITARRPLKMFCYAVGIVRGRAFTYHHDVLHALKKWGFSVNPFIRQVEGIEKCIEFYRELQDLRNELPYEIDGMVIKVDDLSLQTRLGAVSRSPRWAVACKFAATQATTVIRDIIVNVGRTGTLTPVALMTPVKVGGVTVSRATLHNQDEIDKKDIRIGDTVLVQRAGDVIPEVVKVIVSNRSGREIPFKIPDTCPECGSEVVRLAGEAAHRCIGLSCPAQLRRHIQHFVSRGGMDIEGLGDKLVSQLVNQKLIHDPADLYYLSHDALLNLERMAEKSVSNLLSAIELSKHPSLDKIIFALGIRHVGEHISKILARRFRTLDALINTTENELLAIRDIGPEVSSSILEFFRNASNRRVIEKLKKAGVSPLETISPRSAPLTGKTFVFTGALSRMTRDEAKQIVESLGGQAAGTVTKKTDYVVAGEAAGSKLQKAQKAGIAILSEEEFLRLAGKI.

Residues 35–39 (DAEYD), 84–85 (SL), and E116 each bind NAD(+). The active-site N6-AMP-lysine intermediate is the K118. NAD(+) is bound by residues R139, E179, K295, and K319. The Zn(2+) site is built by C413, C416, C431, and C436. Residues 593–672 (PRSAPLTGKT…EEFLRLAGKI (80 aa)) enclose the BRCT domain.

Belongs to the NAD-dependent DNA ligase family. LigA subfamily. Mg(2+) is required as a cofactor. Mn(2+) serves as cofactor.

The enzyme catalyses NAD(+) + (deoxyribonucleotide)n-3'-hydroxyl + 5'-phospho-(deoxyribonucleotide)m = (deoxyribonucleotide)n+m + AMP + beta-nicotinamide D-nucleotide.. In terms of biological role, DNA ligase that catalyzes the formation of phosphodiester linkages between 5'-phosphoryl and 3'-hydroxyl groups in double-stranded DNA using NAD as a coenzyme and as the energy source for the reaction. It is essential for DNA replication and repair of damaged DNA. This Syntrophus aciditrophicus (strain SB) protein is DNA ligase.